The chain runs to 904 residues: Protein translocase subunit SecA (904 aa).

Residues Q87, 105-109 (GEGKT), and D512 each bind ATP. Residues 851–870 (LARQQQLSHQTDNSALMSEE) are disordered. Residues C888, C890, C899, and H900 each coordinate Zn(2+).

The protein belongs to the SecA family. As to quaternary structure, monomer and homodimer. Part of the essential Sec protein translocation apparatus which comprises SecA, SecYEG and auxiliary proteins SecDF-YajC and YidC. Zn(2+) is required as a cofactor.

The protein localises to the cell inner membrane. The protein resides in the cytoplasm. It catalyses the reaction ATP + H2O + cellular proteinSide 1 = ADP + phosphate + cellular proteinSide 2.. Functionally, part of the Sec protein translocase complex. Interacts with the SecYEG preprotein conducting channel. Has a central role in coupling the hydrolysis of ATP to the transfer of proteins into and across the cell membrane, serving both as a receptor for the preprotein-SecB complex and as an ATP-driven molecular motor driving the stepwise translocation of polypeptide chains across the membrane. The polypeptide is Protein translocase subunit SecA (Yersinia pseudotuberculosis serotype O:1b (strain IP 31758)).